A 276-amino-acid chain; its full sequence is ATP synthase subunit delta (276 aa).

It belongs to the ATPase delta chain family. As to quaternary structure, F-type ATPases have 2 components, F(1) - the catalytic core - and F(0) - the membrane proton channel. F(1) has five subunits: alpha(3), beta(3), gamma(1), delta(1), epsilon(1). F(0) has three main subunits: a(1), b(2) and c(10-14). The alpha and beta chains form an alternating ring which encloses part of the gamma chain. F(1) is attached to F(0) by a central stalk formed by the gamma and epsilon chains, while a peripheral stalk is formed by the delta and b chains.

It localises to the cell membrane. Its function is as follows. F(1)F(0) ATP synthase produces ATP from ADP in the presence of a proton or sodium gradient. F-type ATPases consist of two structural domains, F(1) containing the extramembraneous catalytic core and F(0) containing the membrane proton channel, linked together by a central stalk and a peripheral stalk. During catalysis, ATP synthesis in the catalytic domain of F(1) is coupled via a rotary mechanism of the central stalk subunits to proton translocation. In terms of biological role, this protein is part of the stalk that links CF(0) to CF(1). It either transmits conformational changes from CF(0) to CF(1) or is implicated in proton conduction. The polypeptide is ATP synthase subunit delta (Frankia casuarinae (strain DSM 45818 / CECT 9043 / HFP020203 / CcI3)).